A 418-amino-acid chain; its full sequence is UPF0754 membrane protein alr5253 (418 aa).

2 helical membrane passes run 10-30 (WSHLWLYVSPPILGGIIGYFT) and 394-414 (IVSLGGILGLIVGLFQTAFFI).

It belongs to the UPF0754 family.

The protein resides in the cell inner membrane. This chain is UPF0754 membrane protein alr5253, found in Nostoc sp. (strain PCC 7120 / SAG 25.82 / UTEX 2576).